The chain runs to 258 residues: Ditrans,polycis-undecaprenyl-diphosphate synthase ((2E,6E)-farnesyl-diphosphate specific) (258 aa).

Asp-24 is a catalytic residue. Asp-24 provides a ligand contact to Mg(2+). Substrate contacts are provided by residues 25–28, Trp-29, Arg-37, His-41, and 69–71; these read GNGR and SSE. The Proton acceptor role is filled by Asn-72. Substrate contacts are provided by residues Trp-73, Arg-75, Arg-192, and 198–200; that span reads RIS. Residue Glu-211 participates in Mg(2+) binding.

It belongs to the UPP synthase family. Homodimer. Mg(2+) serves as cofactor.

The enzyme catalyses 8 isopentenyl diphosphate + (2E,6E)-farnesyl diphosphate = di-trans,octa-cis-undecaprenyl diphosphate + 8 diphosphate. Functionally, catalyzes the sequential condensation of isopentenyl diphosphate (IPP) with (2E,6E)-farnesyl diphosphate (E,E-FPP) to yield (2Z,6Z,10Z,14Z,18Z,22Z,26Z,30Z,34E,38E)-undecaprenyl diphosphate (di-trans,octa-cis-UPP). UPP is the precursor of glycosyl carrier lipid in the biosynthesis of bacterial cell wall polysaccharide components such as peptidoglycan and lipopolysaccharide. The protein is Ditrans,polycis-undecaprenyl-diphosphate synthase ((2E,6E)-farnesyl-diphosphate specific) of Xanthomonas campestris pv. campestris (strain ATCC 33913 / DSM 3586 / NCPPB 528 / LMG 568 / P 25).